The primary structure comprises 107 residues: Ferredoxin 1 (107 aa).

2 4Fe-4S ferredoxin-type domains span residues 2–30 (TFVV…YEGP) and 31–60 (NFLV…SEDE). [3Fe-4S] cluster contacts are provided by Cys9 and Cys17. [4Fe-4S] cluster is bound by residues Cys21, Cys40, Cys43, and Cys46. Cys50 provides a ligand contact to [3Fe-4S] cluster.

The cofactor is [4Fe-4S] cluster. It depends on [3Fe-4S] cluster as a cofactor.

Its function is as follows. Ferredoxins are iron-sulfur proteins that transfer electrons in a wide variety of metabolic reactions. This Stutzerimonas stutzeri (Pseudomonas stutzeri) protein is Ferredoxin 1.